A 37-amino-acid polypeptide reads, in one-letter code: Large ribosomal subunit protein bL36 (37 aa).

This sequence belongs to the bacterial ribosomal protein bL36 family.

The chain is Large ribosomal subunit protein bL36 from Borreliella afzelii (strain PKo) (Borrelia afzelii).